A 353-amino-acid polypeptide reads, in one-letter code: Nicotinate-nucleotide--dimethylbenzimidazole phosphoribosyltransferase (353 aa).

Glutamate 319 functions as the Proton acceptor in the catalytic mechanism.

This sequence belongs to the CobT family.

It carries out the reaction 5,6-dimethylbenzimidazole + nicotinate beta-D-ribonucleotide = alpha-ribazole 5'-phosphate + nicotinate + H(+). Its pathway is nucleoside biosynthesis; alpha-ribazole biosynthesis; alpha-ribazole from 5,6-dimethylbenzimidazole: step 1/2. In terms of biological role, catalyzes the synthesis of alpha-ribazole-5'-phosphate from nicotinate mononucleotide (NAMN) and 5,6-dimethylbenzimidazole (DMB). The chain is Nicotinate-nucleotide--dimethylbenzimidazole phosphoribosyltransferase from Syntrophobacter fumaroxidans (strain DSM 10017 / MPOB).